Consider the following 219-residue polypeptide: Putative ankyrin repeat protein BB_0399 (219 aa).

ANK repeat units lie at residues 104 to 133 (YKIS…SLNQ), 137 to 166 (TGYS…DLSF), and 170 to 199 (NRKT…YIDD).

The protein is Putative ankyrin repeat protein BB_0399 of Borreliella burgdorferi (strain ATCC 35210 / DSM 4680 / CIP 102532 / B31) (Borrelia burgdorferi).